The following is a 129-amino-acid chain: Large ribosomal subunit protein bL12 (129 aa).

Belongs to the bacterial ribosomal protein bL12 family. In terms of assembly, homodimer. Part of the ribosomal stalk of the 50S ribosomal subunit. Forms a multimeric L10(L12)X complex, where L10 forms an elongated spine to which 2 to 4 L12 dimers bind in a sequential fashion. Binds GTP-bound translation factors.

Its function is as follows. Forms part of the ribosomal stalk which helps the ribosome interact with GTP-bound translation factors. Is thus essential for accurate translation. The sequence is that of Large ribosomal subunit protein bL12 from Fervidobacterium nodosum (strain ATCC 35602 / DSM 5306 / Rt17-B1).